The sequence spans 192 residues: Imidazoleglycerol-phosphate dehydratase (192 aa).

The protein belongs to the imidazoleglycerol-phosphate dehydratase family.

It is found in the cytoplasm. The catalysed reaction is D-erythro-1-(imidazol-4-yl)glycerol 3-phosphate = 3-(imidazol-4-yl)-2-oxopropyl phosphate + H2O. Its pathway is amino-acid biosynthesis; L-histidine biosynthesis; L-histidine from 5-phospho-alpha-D-ribose 1-diphosphate: step 6/9. The sequence is that of Imidazoleglycerol-phosphate dehydratase from Vesicomyosocius okutanii subsp. Calyptogena okutanii (strain HA).